The primary structure comprises 248 residues: Large ribosomal subunit protein uL29m (248 aa).

Disordered regions lie at residues V77 to G107 and A223 to S248.

The protein belongs to the universal ribosomal protein uL29 family. In terms of assembly, component of the mitochondrial large ribosomal subunit. Mature mitochondrial ribosomes consist of a small (37S) and a large (54S) subunit. The 37S subunit contains at least 33 different proteins and 1 molecule of RNA (15S). The 54S subunit contains at least 45 different proteins and 1 molecule of RNA (21S).

It is found in the mitochondrion. The sequence is that of Large ribosomal subunit protein uL29m (MRPL4) from Ajellomyces capsulatus (strain NAm1 / WU24) (Darling's disease fungus).